Reading from the N-terminus, the 1166-residue chain is Folliculin-interacting protein 1 (1166 aa).

In terms of domain architecture, uDENN FNIP1/2-type spans 37 to 478 (FDPSQIRLIV…TVMPNGQPPI (442 aa)). 4 positions are modified to phosphoserine; by AMPK: serine 220, serine 230, serine 232, and serine 261. The residue at position 294 (threonine 294) is a Phosphothreonine. Serine 296 is subject to Phosphoserine. Positions 486–1092 (SSQSVDMLAK…VSNLLHSTLQ (607 aa)) constitute a cDENN FNIP1/2-type domain. Serine 593 is modified (phosphoserine; by AMPK). Serine 594 is subject to Phosphoserine. Positions 608 and 610 each coordinate Zn(2+). A Cys degron motif is present at residues 608 to 615 (CNCKYCSH). Positions 611–612 (KY) are KY-finger. Zn(2+) is bound by residues cysteine 613 and histidine 615. Phosphoserine occurs at positions 760 and 763. Disordered stretches follow at residues 781–817 (TKPL…VSEE) and 912–956 (LVPH…HDMT). Composition is skewed to basic and acidic residues over residues 783 to 805 (PLKE…KDQS) and 915 to 925 (HGDKESSDKKI). The interval 929 to 1166 (TEWDIPRNES…HSPYVAQILL (238 aa)) is interaction with HSP90AA1. Serine 938 is modified (phosphoserine; alternate; by CK2). The O-linked (GlcNAc) serine; alternate glycan is linked to serine 938. 4 positions are modified to phosphoserine; by CK2: serine 939, serine 941, serine 946, and serine 948. Residues 1102–1157 (FCVMHLEDRLQELYFKSKMLSEYLRGQMRVHVKELGVVLGIESSDLPLLAAVASTH) form the dDENN FNIP1/2-type domain. A Glycyl lysine isopeptide (Lys-Gly) (interchain with G-Cter in ubiquitin) cross-link involves residue lysine 1119.

It belongs to the FNIP family. In terms of assembly, homodimer and homomultimer. Heterodimer and heteromultimer with FNIP2. Interacts with FLCN (via C-terminus). Component of the lysosomal folliculin complex (LFC), composed of FLCN, FNIP1 (or FNIP2), RagA/RRAGA or RagB/RRAGB GDP-bound, RagC/RRAGC or RagD/RRAGD GTP-bound, and Ragulator. Interacts with HSPCA and with the PRKAA1, PRKAB1 and PRKAG1 subunits of 5'-AMP-activated protein kinase (AMPK). Phosphorylated FLCN and AMPK are preferentially bound. Interacts with HSP70, STIP1, PTGES3, CDC37, BRAF, GCR and CDK4. Interacts with HSP90AA1; the interaction inhibits HSP90AA1 ATPase activity. Interacts with ATP2A2. Phosphorylated by AMPK in response to energetic stress. Phosphorylation by AMPK in response to mitochondrial damage promotes inactivation of the non-canonical mTORC1 signaling, nuclear translocation of TFEB and TFE3, inducing transcription of lysosomal or autophagy genes. Sequential phosphorylation by CK2 promotes its gradual interaction with HSP90AA1/Hsp90. Priming phosphorylation at Ser-938 is followed by relay phosphorylation at Ser-939, Ser-941, Ser-946 and Ser-948, promoting its gradual interaction with HSP90AA1/Hsp90. This leads to incremental inhibition of HSP90AA1/Hsp90 ATPase activity and gradual activation of both kinase and non-kinase clients. Dephosphorylated by protein phosphatase 5 (PP5), promoting glycosylation by OGT. In terms of processing, glcNAcylation at Ser-938 by OGT following dephosphorylation by protein phosphatase 5 (PP5) promotes ubiquitination and degradation by the proteasome. Post-translationally, ubiquitinated through 'Lys-11' linkage of ubiquitin moieties at Lys-1119 following glycosylation by OGT, leading to its degradation by the proteasome. Ubiquitinated by the CRL2(FEM1B) complex in response to reductive stress: reductive stress causes reduction of the conserved Cys degron in FNIP1, followed by zinc-binding, zinc acting as a molecular glue for recognition by the CRL2(FEM1B) complex. Ubiquitination leads to FNIP1 degradation, and activation of mitochondria to recalibrate reactive oxygen species (ROS). Oxidation of the Cys degron in normal conditions promotes its stabilization by preventing recognition and ubiquitination by the CRL2(FEM1B) complex. Strong expression is found in the heart, liver placenta, muscle, nasal mucosa, salivary gland and uvula and moderate expression in kidney and lung. Higher levels detected in clear cell renal cell carcinoma (RCC) and chromophobe RCC than in normal kidney tissue. Expressed in peripheral blood mononuclear cells.

It is found in the lysosome membrane. The protein localises to the cytoplasm. The protein resides in the cytosol. Functionally, binding partner of the GTPase-activating protein FLCN: involved in the cellular response to amino acid availability by regulating the non-canonical mTORC1 signaling cascade controlling the MiT/TFE factors TFEB and TFE3. Required to promote FLCN recruitment to lysosomes and interaction with Rag GTPases, leading to activation of the non-canonical mTORC1 signaling. In low-amino acid conditions, component of the lysosomal folliculin complex (LFC) on the membrane of lysosomes, which inhibits the GTPase-activating activity of FLCN, thereby inactivating mTORC1 and promoting nuclear translocation of TFEB and TFE3. Upon amino acid restimulation, disassembly of the LFC complex liberates the GTPase-activating activity of FLCN, leading to activation of mTORC1 and subsequent inactivation of TFEB and TFE3. Together with FLCN, regulates autophagy: following phosphorylation by ULK1, interacts with GABARAP and promotes autophagy. In addition to its role in mTORC1 signaling, also acts as a co-chaperone of HSP90AA1/Hsp90: following gradual phosphorylation by CK2, inhibits the ATPase activity of HSP90AA1/Hsp90, leading to activate both kinase and non-kinase client proteins of HSP90AA1/Hsp90. Acts as a scaffold to load client protein FLCN onto HSP90AA1/Hsp90. Competes with the activating co-chaperone AHSA1 for binding to HSP90AA1, thereby providing a reciprocal regulatory mechanism for chaperoning of client proteins. Also acts as a core component of the reductive stress response by inhibiting activation of mitochondria in normal conditions: in response to reductive stress, the conserved Cys degron is reduced, leading to recognition and polyubiquitylation by the CRL2(FEM1B) complex, followed by proteasomal. Required for B-cell development. This chain is Folliculin-interacting protein 1, found in Homo sapiens (Human).